Reading from the N-terminus, the 317-residue chain is Transaldolase (317 aa).

K132 serves as the catalytic Schiff-base intermediate with substrate.

Belongs to the transaldolase family. Type 1 subfamily. In terms of assembly, homodimer.

The protein localises to the cytoplasm. The catalysed reaction is D-sedoheptulose 7-phosphate + D-glyceraldehyde 3-phosphate = D-erythrose 4-phosphate + beta-D-fructose 6-phosphate. Its pathway is carbohydrate degradation; pentose phosphate pathway; D-glyceraldehyde 3-phosphate and beta-D-fructose 6-phosphate from D-ribose 5-phosphate and D-xylulose 5-phosphate (non-oxidative stage): step 2/3. Its function is as follows. Transaldolase is important for the balance of metabolites in the pentose-phosphate pathway. In Yersinia enterocolitica serotype O:8 / biotype 1B (strain NCTC 13174 / 8081), this protein is Transaldolase.